Consider the following 468-residue polypeptide: 6-phosphogluconate dehydrogenase, decarboxylating (468 aa).

NADP(+)-binding positions include 10 to 15, 33 to 35, 74 to 76, and asparagine 102; these read GMAVMG, NRT, and VQS. Residues asparagine 102 and 128-130 contribute to the substrate site; that span reads SGG. The Proton acceptor role is filled by lysine 182. 185–186 contributes to the substrate binding site; the sequence is HN. The Proton donor role is filled by glutamate 189. The substrate site is built by tyrosine 190, lysine 259, arginine 286, arginine 445, and histidine 451.

This sequence belongs to the 6-phosphogluconate dehydrogenase family. Homodimer.

The enzyme catalyses 6-phospho-D-gluconate + NADP(+) = D-ribulose 5-phosphate + CO2 + NADPH. It functions in the pathway carbohydrate degradation; pentose phosphate pathway; D-ribulose 5-phosphate from D-glucose 6-phosphate (oxidative stage): step 3/3. Functionally, catalyzes the oxidative decarboxylation of 6-phosphogluconate to ribulose 5-phosphate and CO(2), with concomitant reduction of NADP to NADPH. The sequence is that of 6-phosphogluconate dehydrogenase, decarboxylating (gnd) from Buchnera aphidicola subsp. Acyrthosiphon pisum (strain APS) (Acyrthosiphon pisum symbiotic bacterium).